Consider the following 423-residue polypeptide: MKTIRIIGAGLSGCEAAYYLLKKGYFVELYEIKTIKKNPIQHYDYFCELAYSDSFRSTDLNTSVGTLKKELELLDSLIIKAARYASINQNNELVVNRIEFSKYITNYLKTFNNLKIIEQEYLNIDLNIPTIIAIGPISTPNFLTNLKKLINKENLKLFDTVEPTILKQSINMDICYSLDNNLNYLYCDLNKEQFEKFYNALISAKTFNSPLKNEIELLEKNNYFSIESLAKNKQEFINHFKPINNNAYITITLKKDSVINNLYTIVNFQTNLMWNEQLKVFSLIPGLENLKIMKYGVMHKNNYINTKKLLNLGVQLKTNKNIFFAGQIIGVDGYVESVCSGLISAINLDRYLNNKKMIIPNKNSTIGSLYNYLLKTDSNFSPMRINWALVDMIGGFELSDNSKKIYSKRAIKLIKQYLKKINT.

G8 to G13 is a binding site for FAD.

Belongs to the MnmG family. TrmFO subfamily. FAD is required as a cofactor.

The protein resides in the cytoplasm. It carries out the reaction uridine(54) in tRNA + (6R)-5,10-methylene-5,6,7,8-tetrahydrofolate + NADH + H(+) = 5-methyluridine(54) in tRNA + (6S)-5,6,7,8-tetrahydrofolate + NAD(+). The enzyme catalyses uridine(54) in tRNA + (6R)-5,10-methylene-5,6,7,8-tetrahydrofolate + NADPH + H(+) = 5-methyluridine(54) in tRNA + (6S)-5,6,7,8-tetrahydrofolate + NADP(+). Its function is as follows. Catalyzes the folate-dependent formation of 5-methyl-uridine at position 54 (M-5-U54) in all tRNAs. In Mycoplasma capricolum subsp. capricolum (strain California kid / ATCC 27343 / NCTC 10154), this protein is Methylenetetrahydrofolate--tRNA-(uracil-5-)-methyltransferase TrmFO 2.